The chain runs to 885 residues: Conidiophore development regulator abaA (885 aa).

Residues 1-20 are compositionally biased toward polar residues; the sequence is MSSLFQPRPVLSSQRYSQSP. A disordered region spans residues 1-25; sequence MSSLFQPRPVLSSQRYSQSPDYVDT. A DNA-binding region (TEA) is located at residues 124–217; sequence QKDKGGVWRR…QVVKKFFEDL (94 aa). Disordered stretches follow at residues 502 to 539 and 817 to 885; these read KEKR…WTRR and APGS…TAGW. Basic and acidic residues-rich tracts occupy residues 508-521 and 831-840; these read YADG…ERAG and VESHAGDHHG.

The protein belongs to the TEC1 family.

The protein localises to the nucleus. Functionally, brlA, abaA and wetA are pivotal regulators of conidiophore development and conidium maturation. They act individually and together to regulate their own expression and that of numerous other sporulation-specific genes. BrlA, abaA and wetA act together to positively regulate the expression of the Pks1 gene cluster that mediates the biosynthesis of an anthraquinone derivative pigment that contributes to conidial pigmentation that provides protection from UV radiation, heat and cold stress. In Metarhizium robertsii (strain ARSEF 23 / ATCC MYA-3075) (Metarhizium anisopliae (strain ARSEF 23)), this protein is Conidiophore development regulator abaA.